The sequence spans 214 residues: Cdc42 effector protein 2 (214 aa).

Serine 2 is modified (N-acetylserine). Residues 30 to 44 enclose the CRIB domain; it reads ISPPLGDFRHTIHIG. A phosphoserine mark is found at serine 31, serine 101, serine 137, serine 141, and serine 145. The disordered stretch occupies residues 118-151; the sequence is ALTLPTTQAPPKPPRLHLESPQPSPKSSPQEAGN.

The protein belongs to the BORG/CEP family. Interacts with CDC42 and RHOQ, in a GTP-dependent manner, and with SEPT7.

Its subcellular location is the endomembrane system. The protein localises to the cytoplasm. It is found in the cytoskeleton. Probably involved in the organization of the actin cytoskeleton. May act downstream of CDC42 to induce actin filament assembly leading to cell shape changes. Induces pseudopodia formation in fibroblasts in a CDC42-dependent manner. In Rattus norvegicus (Rat), this protein is Cdc42 effector protein 2 (Cdc42ep2).